The following is a 234-amino-acid chain: BTB/POZ domain-containing protein KCTD5 (234 aa).

N-acetylalanine is present on Ala2. Ser10 carries the phosphoserine modification. In terms of domain architecture, BTB spans 44–146 (KWVRLNVGGT…LVKDKIRERD (103 aa)). Positions 213-234 (PYGTASEPSEKAKILQERGSRM) are disordered. Positions 220–234 (PSEKAKILQERGSRM) are enriched in basic and acidic residues.

In terms of assembly, homopentamer. Interacts (via C-terminus) with GRASP55/GORASP2. Interacts with CUL3 and with ubiquitinated proteins. Interacts with CRY1. (Microbial infection) Interacts with adeno-associated virus 2 (AAV-2) REP proteins.

The protein resides in the cytoplasm. Its subcellular location is the cytosol. It is found in the nucleus. Its interaction with CUL3 suggests that it may act as a substrate adapter in some E3 ligase complex. Does not affect the function of Kv channel Kv2.1/KCNB1, Kv1.2/KCNA2, Kv4.2/KCND2 and Kv3.4/KCNC4. This is BTB/POZ domain-containing protein KCTD5 (KCTD5) from Homo sapiens (Human).